A 438-amino-acid chain; its full sequence is Tol-Pal system protein TolB (438 aa).

Residues 1-35 (MITMKNILKLRATGLLLLLLLMISVLGNGIGQAMA) form the signal peptide.

Belongs to the TolB family. The Tol-Pal system is composed of five core proteins: the inner membrane proteins TolA, TolQ and TolR, the periplasmic protein TolB and the outer membrane protein Pal. They form a network linking the inner and outer membranes and the peptidoglycan layer.

The protein resides in the periplasm. In terms of biological role, part of the Tol-Pal system, which plays a role in outer membrane invagination during cell division and is important for maintaining outer membrane integrity. This Desulfotalea psychrophila (strain LSv54 / DSM 12343) protein is Tol-Pal system protein TolB.